Reading from the N-terminus, the 185-residue chain is MKDPIVKKTEEKMKKSVNSIDEELKKLRTGRPSPALLEEIKVDYYGVPTPINQVATVNVTEERSLIIKPWEKNLLNAVEKAIQASDLGLNPMNDGNVIRLVFPTPTTEQRQKWVKKAKDIVEHGKIAVRNIRREILKELKDLKKNGEISEDDERRLEKEIQNLTDKYVEELDKLFERKEKEIMEF.

This sequence belongs to the RRF family.

It localises to the cytoplasm. Its function is as follows. Responsible for the release of ribosomes from messenger RNA at the termination of protein biosynthesis. May increase the efficiency of translation by recycling ribosomes from one round of translation to another. This chain is Ribosome-recycling factor, found in Thermosipho melanesiensis (strain DSM 12029 / CIP 104789 / BI429).